The sequence spans 285 residues: Dermonecrotic toxin LlSicTox-alphaIII2 (285 aa).

His12 is a catalytic residue. Residues Glu32 and Asp34 each contribute to the Mg(2+) site. His47 functions as the Nucleophile in the catalytic mechanism. Cys51 and Cys57 are joined by a disulfide. Mg(2+) is bound at residue Asp91.

The protein belongs to the arthropod phospholipase D family. Class I subfamily. Mg(2+) serves as cofactor. Expressed by the venom gland.

The protein localises to the secreted. The catalysed reaction is an N-(acyl)-sphingosylphosphocholine = an N-(acyl)-sphingosyl-1,3-cyclic phosphate + choline. The enzyme catalyses an N-(acyl)-sphingosylphosphoethanolamine = an N-(acyl)-sphingosyl-1,3-cyclic phosphate + ethanolamine. It carries out the reaction a 1-acyl-sn-glycero-3-phosphocholine = a 1-acyl-sn-glycero-2,3-cyclic phosphate + choline. It catalyses the reaction a 1-acyl-sn-glycero-3-phosphoethanolamine = a 1-acyl-sn-glycero-2,3-cyclic phosphate + ethanolamine. In terms of biological role, dermonecrotic toxins cleave the phosphodiester linkage between the phosphate and headgroup of certain phospholipids (sphingolipid and lysolipid substrates), forming an alcohol (often choline) and a cyclic phosphate. This toxin acts on sphingomyelin (SM) (228.2 U/mg). It may also act on ceramide phosphoethanolamine (CPE), lysophosphatidylcholine (LPC) and lysophosphatidylethanolamine (LPE), but not on lysophosphatidylserine (LPS), and lysophosphatidylglycerol (LPG). It acts by transphosphatidylation, releasing exclusively cyclic phosphate products as second products. Induces dermonecrosis, hemolysis, increased vascular permeability, edema, inflammatory response, and platelet aggregation. Is lethal to mice. The polypeptide is Dermonecrotic toxin LlSicTox-alphaIII2 (Loxosceles laeta (South American recluse spider)).